Here is a 373-residue protein sequence, read N- to C-terminus: Peptide chain release factor 1-like, mitochondrial (373 aa).

A mitochondrion-targeting transit peptide spans 1 to 13; that stretch reads MRSGFLRSARRLW. Residues 56–111 adopt a coiled-coil conformation; it reads QLAAAARLLNEKERELRDTESLLHDENEDLKKLAESEIALCQKEIAELKHRIISLL. Residues 229–293 form a GGQ domain region; sequence PKDLRIDTKR…LRARLYSMRL (65 aa). The short motif at 243–245 is the GGQ element; sequence GGQ. N5-methylglutamine is present on Q245.

The protein belongs to the prokaryotic/mitochondrial release factor family. In terms of processing, methylation of glutamine in the GGQ triplet by HEMK1 is conserved from bacteria to mammals.

It localises to the mitochondrion. Functionally, mitochondrial peptide chain release factor that directs the termination of translation in response to the peptide chain termination codons UAA and UAG. The sequence is that of Peptide chain release factor 1-like, mitochondrial (Mtrf1l) from Rattus norvegicus (Rat).